Consider the following 370-residue polypeptide: tRNA/tmRNA (uracil-C(5))-methyltransferase (370 aa).

Positions 190, 218, 223, 239, and 299 each coordinate S-adenosyl-L-methionine. Cysteine 324 acts as the Nucleophile in catalysis. Glutamate 358 acts as the Proton acceptor in catalysis.

It belongs to the class I-like SAM-binding methyltransferase superfamily. RNA M5U methyltransferase family. TrmA subfamily.

The catalysed reaction is uridine(54) in tRNA + S-adenosyl-L-methionine = 5-methyluridine(54) in tRNA + S-adenosyl-L-homocysteine + H(+). The enzyme catalyses uridine(341) in tmRNA + S-adenosyl-L-methionine = 5-methyluridine(341) in tmRNA + S-adenosyl-L-homocysteine + H(+). Functionally, dual-specificity methyltransferase that catalyzes the formation of 5-methyluridine at position 54 (m5U54) in all tRNAs, and that of position 341 (m5U341) in tmRNA (transfer-mRNA). This is tRNA/tmRNA (uracil-C(5))-methyltransferase from Sodalis glossinidius (strain morsitans).